The primary structure comprises 539 residues: Putative S-adenosyl-L-methionine-dependent methyltransferase MAP_4079 (539 aa).

S-adenosyl-L-methionine-binding positions include D134 and 163 to 164 (DL). The disordered stretch occupies residues 290 to 392 (AGYGRGRRRP…RGEPGERGGQ (103 aa)). The span at 301–313 (SATSCRGTCSSPR) shows a compositional bias: polar residues. Over residues 341–351 (HGFGNQCGGPD) the composition is skewed to gly residues.

Belongs to the UPF0677 family.

Its function is as follows. Exhibits S-adenosyl-L-methionine-dependent methyltransferase activity. This Mycolicibacterium paratuberculosis (strain ATCC BAA-968 / K-10) (Mycobacterium paratuberculosis) protein is Putative S-adenosyl-L-methionine-dependent methyltransferase MAP_4079.